Here is a 367-residue protein sequence, read N- to C-terminus: tRNA-specific 2-thiouridylase MnmA (367 aa).

ATP-binding positions include 12-19 and methionine 38; that span reads GMSGGVDS. The segment at 98 to 100 is interaction with target base in tRNA; sequence NPD. Catalysis depends on cysteine 103, which acts as the Nucleophile. Cysteine 103 and cysteine 200 are oxidised to a cystine. Glycine 128 is an ATP binding site. The interval 150 to 152 is interaction with tRNA; that stretch reads KDQ. The active-site Cysteine persulfide intermediate is the cysteine 200. Residues 312 to 313 are interaction with tRNA; the sequence is RY.

Belongs to the MnmA/TRMU family. As to quaternary structure, interacts with TusE.

Its subcellular location is the cytoplasm. It catalyses the reaction S-sulfanyl-L-cysteinyl-[protein] + uridine(34) in tRNA + AH2 + ATP = 2-thiouridine(34) in tRNA + L-cysteinyl-[protein] + A + AMP + diphosphate + H(+). Catalyzes the 2-thiolation of uridine at the wobble position (U34) of tRNA(Lys), tRNA(Glu) and tRNA(Gln), leading to the formation of s(2)U34, the first step of tRNA-mnm(5)s(2)U34 synthesis. Sulfur is provided by IscS, via a sulfur-relay system. Binds ATP and its substrate tRNAs. This chain is tRNA-specific 2-thiouridylase MnmA, found in Photorhabdus laumondii subsp. laumondii (strain DSM 15139 / CIP 105565 / TT01) (Photorhabdus luminescens subsp. laumondii).